Here is a 250-residue protein sequence, read N- to C-terminus: uncharacterized protein (250 aa).

Residues 1 to 17 (MRTLVLLSSVAILSTLA) form the signal peptide. N-linked (GlcNAc...) asparagine glycosylation is found at N48, N159, N223, and N239.

Its subcellular location is the secreted. This is an uncharacterized protein from Caenorhabditis elegans.